We begin with the raw amino-acid sequence, 415 residues long: MATRNSPMPLGTAQGDPGEAGTRPGPDASLRDTGAATQLKMKPRKVHKIKAVIIDLGSQYCKCGYAGEPRPTYFISSTVGKRCPEAADAGDTRKWTLVGHELLNTEAPLKLVNPLKHGIVVDWDCVQDIWEYIFRTAMKILPEEHAVLVSDPPLSPSSNREKYAELMFETFGIPAMHVTSQSLLSIYSYGKTSGLVVESGHGVSHVVPISEGDVLPGLTSRADYAGGDLTNYLMQLLNEAGHAFTDDHLHIIEHIKKKCCYAAFLPEEELGLVPEELRVDYELPDGKLITIGQERFRCSEMLFQPSLAGSTQPGLPELTAACLGRCQDTGFKEEMAANVLLCGGCTMLDGFPERFQRELSLLCPGDSPAVAAAPERKTSVWTGGSILASLQAFQQLWVSKEEFEERGSVAIYSKC.

Positions 1–31 (MATRNSPMPLGTAQGDPGEAGTRPGPDASLR) are disordered. Ser-6 bears the Phosphoserine mark.

It belongs to the actin family. Detected only in the testis and, to a lesser extent, in the prostate.

The protein resides in the cytoplasm. Its subcellular location is the cytoskeleton. The chain is Actin-like protein 7B (ACTL7B) from Homo sapiens (Human).